A 137-amino-acid chain; its full sequence is Large ribosomal subunit protein uL16 (137 aa).

Belongs to the universal ribosomal protein uL16 family. In terms of assembly, part of the 50S ribosomal subunit.

Functionally, binds 23S rRNA and is also seen to make contacts with the A and possibly P site tRNAs. The protein is Large ribosomal subunit protein uL16 of Thioalkalivibrio sulfidiphilus (strain HL-EbGR7).